The following is a 365-amino-acid chain: 3-dehydroquinate synthase (365 aa).

NAD(+)-binding positions include 75-80 (DAESGK), 109-113 (GAATD), 133-134 (TT), Lys-146, and Lys-155. Glu-188, His-253, and His-269 together coordinate Zn(2+).

The protein belongs to the sugar phosphate cyclases superfamily. Dehydroquinate synthase family. It depends on NAD(+) as a cofactor. Co(2+) serves as cofactor. Requires Zn(2+) as cofactor.

It is found in the cytoplasm. It catalyses the reaction 7-phospho-2-dehydro-3-deoxy-D-arabino-heptonate = 3-dehydroquinate + phosphate. It functions in the pathway metabolic intermediate biosynthesis; chorismate biosynthesis; chorismate from D-erythrose 4-phosphate and phosphoenolpyruvate: step 2/7. In terms of biological role, catalyzes the conversion of 3-deoxy-D-arabino-heptulosonate 7-phosphate (DAHP) to dehydroquinate (DHQ). The polypeptide is 3-dehydroquinate synthase (Corynebacterium efficiens (strain DSM 44549 / YS-314 / AJ 12310 / JCM 11189 / NBRC 100395)).